The chain runs to 828 residues: Periplasmic nitrate reductase (828 aa).

The tat-type signal signal peptide spans 1–31; that stretch reads MKLSRRSFMKANAVAAAAAAAGLSVPGVARA. Residues 39–95 enclose the 4Fe-4S Mo/W bis-MGD-type domain; sequence IKWDKAPCRFCGTGCGVLVGTQQGRVVACQGDPDAPVNRGLNCIKGYFLPKIMYGKD. 4 residues coordinate [4Fe-4S] cluster: Cys46, Cys49, Cys53, and Cys81. Mo-bis(molybdopterin guanine dinucleotide) contacts are provided by residues Lys83, Gln150, Asn175, Cys179, 212-219, 243-247, 262-264, Met372, Gln376, Asn482, 508-509, Lys531, Asp558, and 718-727; these read WGSNMAEM, STFQH, QSD, SD, and TGRVLEHWHT. Phe794 lines the substrate pocket. The Mo-bis(molybdopterin guanine dinucleotide) site is built by Asn802 and Lys819.

Belongs to the prokaryotic molybdopterin-containing oxidoreductase family. NasA/NapA/NarB subfamily. As to quaternary structure, component of the periplasmic nitrate reductase NapAB complex composed of NapA and NapB. Requires [4Fe-4S] cluster as cofactor. The cofactor is Mo-bis(molybdopterin guanine dinucleotide). Post-translationally, predicted to be exported by the Tat system. The position of the signal peptide cleavage has not been experimentally proven.

It is found in the periplasm. The enzyme catalyses 2 Fe(II)-[cytochrome] + nitrate + 2 H(+) = 2 Fe(III)-[cytochrome] + nitrite + H2O. Its function is as follows. Catalytic subunit of the periplasmic nitrate reductase complex NapAB. Receives electrons from NapB and catalyzes the reduction of nitrate to nitrite. The chain is Periplasmic nitrate reductase from Salmonella paratyphi C (strain RKS4594).